Consider the following 205-residue polypeptide: Small ribosomal subunit protein uS4 (205 aa).

Residues 18-49 (NIWGRPKSPVNKREYGPGQHGQRRKGKLSDFG) are disordered. The S4 RNA-binding domain maps to 94–157 (RRLDAIVYRA…KQLALVLEAN (64 aa)).

The protein belongs to the universal ribosomal protein uS4 family. As to quaternary structure, part of the 30S ribosomal subunit. Contacts protein S5. The interaction surface between S4 and S5 is involved in control of translational fidelity.

In terms of biological role, one of the primary rRNA binding proteins, it binds directly to 16S rRNA where it nucleates assembly of the body of the 30S subunit. Its function is as follows. With S5 and S12 plays an important role in translational accuracy. The chain is Small ribosomal subunit protein uS4 from Afipia carboxidovorans (strain ATCC 49405 / DSM 1227 / KCTC 32145 / OM5) (Oligotropha carboxidovorans).